Consider the following 350-residue polypeptide: Protein FAM118B (350 aa).

Ala-2 is modified (N-acetylalanine). Phosphoserine is present on Ser-9. Residues 330-350 (AREGQLNGSSAAHGEIRGCST) form a disordered region.

This sequence belongs to the FAM118 family.

The protein resides in the nucleus. It localises to the cajal body. In terms of biological role, may play a role in Cajal bodies formation. This Rattus norvegicus (Rat) protein is Protein FAM118B (Fam118b).